The sequence spans 589 residues: Aspartate--tRNA ligase (589 aa).

L-aspartate is bound at residue E172. An aspartate region spans residues 196–199; the sequence is QLFK. Residue R218 participates in L-aspartate binding. Residues 218–220 and Q227 contribute to the ATP site; that span reads RDE. H449 serves as a coordination point for L-aspartate. E483 lines the ATP pocket. R490 contacts L-aspartate. 535 to 538 provides a ligand contact to ATP; it reads GLDR.

It belongs to the class-II aminoacyl-tRNA synthetase family. Type 1 subfamily. Homodimer.

It localises to the cytoplasm. The catalysed reaction is tRNA(Asp) + L-aspartate + ATP = L-aspartyl-tRNA(Asp) + AMP + diphosphate. In terms of biological role, catalyzes the attachment of L-aspartate to tRNA(Asp) in a two-step reaction: L-aspartate is first activated by ATP to form Asp-AMP and then transferred to the acceptor end of tRNA(Asp). The polypeptide is Aspartate--tRNA ligase (Actinobacillus succinogenes (strain ATCC 55618 / DSM 22257 / CCUG 43843 / 130Z)).